Reading from the N-terminus, the 167-residue chain is Phosphopantetheine adenylyltransferase (167 aa).

Residue Ser9 coordinates substrate. ATP contacts are provided by residues 9-10 (SF) and His17. The substrate site is built by Lys41, Val78, and Arg92. ATP contacts are provided by residues 93 to 95 (GLR), Glu103, and 128 to 134 (SRPITAT).

This sequence belongs to the bacterial CoaD family. In terms of assembly, homohexamer. Mg(2+) serves as cofactor.

The protein localises to the cytoplasm. It carries out the reaction (R)-4'-phosphopantetheine + ATP + H(+) = 3'-dephospho-CoA + diphosphate. Its pathway is cofactor biosynthesis; coenzyme A biosynthesis; CoA from (R)-pantothenate: step 4/5. In terms of biological role, reversibly transfers an adenylyl group from ATP to 4'-phosphopantetheine, yielding dephospho-CoA (dPCoA) and pyrophosphate. This Rhizobium rhizogenes (strain K84 / ATCC BAA-868) (Agrobacterium radiobacter) protein is Phosphopantetheine adenylyltransferase.